A 168-amino-acid chain; its full sequence is Peptide deformylase 2 (168 aa).

Fe cation is bound by residues cysteine 91 and histidine 133. Glutamate 134 is a catalytic residue. Fe cation is bound at residue histidine 137.

The protein belongs to the polypeptide deformylase family. It depends on Fe(2+) as a cofactor.

It catalyses the reaction N-terminal N-formyl-L-methionyl-[peptide] + H2O = N-terminal L-methionyl-[peptide] + formate. In terms of biological role, removes the formyl group from the N-terminal Met of newly synthesized proteins. Requires at least a dipeptide for an efficient rate of reaction. N-terminal L-methionine is a prerequisite for activity but the enzyme has broad specificity at other positions. This chain is Peptide deformylase 2, found in Vibrio vulnificus (strain CMCP6).